A 361-amino-acid polypeptide reads, in one-letter code: Phosphoserine aminotransferase (361 aa).

An L-glutamate-binding site is contributed by Arg-42. Residues 76-77 (AR), Trp-102, Thr-153, Asp-173, and Gln-196 each bind pyridoxal 5'-phosphate. Lys-197 carries the N6-(pyridoxal phosphate)lysine modification. Pyridoxal 5'-phosphate is bound at residue 238 to 239 (NT).

It belongs to the class-V pyridoxal-phosphate-dependent aminotransferase family. SerC subfamily. In terms of assembly, homodimer. The cofactor is pyridoxal 5'-phosphate.

The protein resides in the cytoplasm. It catalyses the reaction O-phospho-L-serine + 2-oxoglutarate = 3-phosphooxypyruvate + L-glutamate. The enzyme catalyses 4-(phosphooxy)-L-threonine + 2-oxoglutarate = (R)-3-hydroxy-2-oxo-4-phosphooxybutanoate + L-glutamate. It participates in amino-acid biosynthesis; L-serine biosynthesis; L-serine from 3-phospho-D-glycerate: step 2/3. It functions in the pathway cofactor biosynthesis; pyridoxine 5'-phosphate biosynthesis; pyridoxine 5'-phosphate from D-erythrose 4-phosphate: step 3/5. Catalyzes the reversible conversion of 3-phosphohydroxypyruvate to phosphoserine and of 3-hydroxy-2-oxo-4-phosphonooxybutanoate to phosphohydroxythreonine. This Yersinia enterocolitica serotype O:8 / biotype 1B (strain NCTC 13174 / 8081) protein is Phosphoserine aminotransferase.